The following is a 308-amino-acid chain: Ava biosynthesis cluster protein O (308 aa).

The protein operates within secondary metabolite biosynthesis. Functionally, part of the cluster that mediates the biosynthesis of a highly modified cyclo-arginine-tryptophan dipeptide (cRW). The first step of the pathway is perfornmed by the arginine-containing cyclodipeptide synthase (RCPDS) avaA that acts as the scaffold-generating enzyme and is responsible for formation of the cyclo-Arg-Trp (cRW) diketopiperazine. AvaB then acts as a multifunctional flavoenzyme that is responsible for generating the cyclo-Arg-formylkynurenine DKP, which can be deformylated by avaC. AvaB then further catalyzes an additional N-oxidation followed by cyclization and dehydration. The next step is an N-acetylation of the guanidine group catalyzed by the arginine N-acetyltransferase avaD. The roles of the additional enzymes identified within the ava cluster still have to be determined. This is Ava biosynthesis cluster protein O from Aspergillus versicolor.